Consider the following 139-residue polypeptide: Putative pre-16S rRNA nuclease (139 aa).

Belongs to the YqgF nuclease family.

The protein resides in the cytoplasm. Its function is as follows. Could be a nuclease involved in processing of the 5'-end of pre-16S rRNA. This is Putative pre-16S rRNA nuclease from Streptococcus pneumoniae (strain JJA).